We begin with the raw amino-acid sequence, 88 residues long: Small ribosomal subunit protein bS20 (88 aa).

Positions 1 to 27 (MANIKSQIKRNKTNEKARLRNKAVKSS) are disordered.

The protein belongs to the bacterial ribosomal protein bS20 family.

Its function is as follows. Binds directly to 16S ribosomal RNA. This Streptomyces griseus subsp. griseus (strain JCM 4626 / CBS 651.72 / NBRC 13350 / KCC S-0626 / ISP 5235) protein is Small ribosomal subunit protein bS20.